We begin with the raw amino-acid sequence, 144 residues long: MYGTCETLCRELAAKYPGYTPLMLVIWSPEEIQALADGMDISLSDPEIRTVLARLEDIPEDQRIESGISSAAAMEIISNVSENRQVTVPAELLASLIQTAEQALWKREWAARDYGLAVPECVTRRQAVVNQARILLKNNTHENG.

This is an uncharacterized protein from Escherichia coli O157:H7.